The primary structure comprises 491 residues: Cobyric acid synthase (491 aa).

The GATase cobBQ-type domain occupies 246 to 435 (KIDVAVIKLP…IHGIFDGANF (190 aa)). The Nucleophile role is filled by Cys327. The active site involves His427.

Belongs to the CobB/CobQ family. CobQ subfamily.

Its pathway is cofactor biosynthesis; adenosylcobalamin biosynthesis. Functionally, catalyzes amidations at positions B, D, E, and G on adenosylcobyrinic A,C-diamide. NH(2) groups are provided by glutamine, and one molecule of ATP is hydrogenolyzed for each amidation. The sequence is that of Cobyric acid synthase from Clostridium acetobutylicum (strain ATCC 824 / DSM 792 / JCM 1419 / IAM 19013 / LMG 5710 / NBRC 13948 / NRRL B-527 / VKM B-1787 / 2291 / W).